Consider the following 217-residue polypeptide: Putative thymidylate synthase (217 aa).

Residue cysteine 139 is part of the active site.

The protein belongs to the thymidylate synthase family. Archaeal-type ThyA subfamily. Monomer.

The protein localises to the cytoplasm. Its pathway is pyrimidine metabolism; dTTP biosynthesis. Functionally, may catalyze the biosynthesis of dTMP using an unknown cosubstrate. In Methanosarcina mazei (strain ATCC BAA-159 / DSM 3647 / Goe1 / Go1 / JCM 11833 / OCM 88) (Methanosarcina frisia), this protein is Putative thymidylate synthase.